The following is a 597-amino-acid chain: Bile salt-activated lipase (597 aa).

The first 18 residues, 1 to 18, serve as a signal peptide directing secretion; that stretch reads LGASRLGPSPGCLAVASA. A disulfide bond links cysteine 82 and cysteine 98. Asparagine 205 is a glycosylation site (N-linked (GlcNAc...) asparagine). The active-site Acyl-ester intermediate is the serine 212. The cysteines at positions 264 and 275 are disulfide-linked. Residue aspartate 338 is the Charge relay system of the active site. A glycan (N-linked (GlcNAc...) asparagine) is linked at asparagine 379. Residue histidine 453 is the Charge relay system of the active site. The segment at 553-591 is disordered; sequence AGASLLPPEDNSQASPVPPADNSGAPTEPSAGDSEVAQM.

It belongs to the type-B carboxylesterase/lipase family. In terms of assembly, interacts with CLC.

Its subcellular location is the secreted. It carries out the reaction a triacylglycerol + H2O = a diacylglycerol + a fatty acid + H(+). The catalysed reaction is 1,2,3-tri-(9Z-octadecenoyl)-glycerol + H2O = di-(9Z)-octadecenoylglycerol + (9Z)-octadecenoate + H(+). It catalyses the reaction 1,2,3-trioctanoylglycerol + H2O = dioctanoylglycerol + octanoate + H(+). The enzyme catalyses a sterol ester + H2O = a sterol + a fatty acid + H(+). It carries out the reaction cholesteryl (9Z-octadecenoate) + H2O = cholesterol + (9Z)-octadecenoate + H(+). The catalysed reaction is an acetyl ester + H2O = an aliphatic alcohol + acetate + H(+). It catalyses the reaction a butanoate ester + H2O = an aliphatic alcohol + butanoate + H(+). The enzyme catalyses 9-hexadecanoyloxy-octadecanoate + H2O = 9-hydroxy-octadecanoate + hexadecanoate + H(+). It carries out the reaction 9-(9Z-octadecenoyloxy)-octadecanoate + H2O = 9-hydroxy-octadecanoate + (9Z)-octadecenoate + H(+). The catalysed reaction is 1-hexadecanoyl-sn-glycero-3-phosphocholine + H2O = sn-glycerol 3-phosphocholine + hexadecanoate + H(+). It catalyses the reaction 12-hexadecanoyloxy-octadecanoate + H2O = 12-hydroxyoctadecanoate + hexadecanoate + H(+). The enzyme catalyses 12-(9Z-octadecenoyloxy)-octadecanoate + H2O = 12-hydroxyoctadecanoate + (9Z)-octadecenoate + H(+). It carries out the reaction 13-(9Z-octadecenoyloxy)-octadecanoate + H2O = 13-hydroxy-octadecanoate + (9Z)-octadecenoate + H(+). The catalysed reaction is 9-(9Z-hexadecenoyloxy)-octadecanoate + H2O = (9Z)-hexadecenoate + 9-hydroxy-octadecanoate + H(+). It catalyses the reaction 12-(9Z-hexadecenoyloxy)-octadecanoate + H2O = 12-hydroxyoctadecanoate + (9Z)-hexadecenoate + H(+). The enzyme catalyses 13-(9Z-hexadecenoyloxy)-octadecanoate + H2O = 13-hydroxy-octadecanoate + (9Z)-hexadecenoate + H(+). It carries out the reaction 12-octadecanoyloxy-octadecanoate + H2O = 12-hydroxyoctadecanoate + octadecanoate + H(+). The catalysed reaction is 13-octadecanoyloxy-octadecanoate + H2O = 13-hydroxy-octadecanoate + octadecanoate + H(+). It catalyses the reaction 5-(9Z-hexadecenoyloxy)-octadecanoate + H2O = 5-hydroxy-octadecanoate + (9Z)-hexadecenoate + H(+). The enzyme catalyses 9-octadecanoyloxy-octadecanoate + H2O = 9-hydroxy-octadecanoate + octadecanoate + H(+). Activated by bile salts such as sodium taurocholate. Functionally, catalyzes the hydrolysis of a wide range of substrates including cholesteryl esters, phospholipids, lysophospholipids, di- and tri-acylglycerols, and fatty acid esters of hydroxy fatty acids (FAHFA). Preferentially hydrolyzes FAHFAs with the ester bond further away from the carboxylate. Unsaturated FAHFAs are hydrolyzed more quickly than saturated FAHFAs. Has an essential role in the complete digestion of dietary lipids and their intestinal absorption, along with the absorption of fat-soluble vitamins. This Bos taurus (Bovine) protein is Bile salt-activated lipase (CEL).